The following is a 279-amino-acid chain: Alcohol dehydrogenase-related 31 kDa protein (279 aa).

11 to 34 provides a ligand contact to NAD(+); the sequence is YVADCGGIALETSKVLMTKNIAKL. Residue Ser-139 participates in substrate binding. Tyr-152 acts as the Proton acceptor in catalysis.

This sequence belongs to the short-chain dehydrogenases/reductases (SDR) family.

The chain is Alcohol dehydrogenase-related 31 kDa protein (Adhr) from Drosophila guanche (Fruit fly).